A 106-amino-acid polypeptide reads, in one-letter code: Replication restart protein PriB (106 aa).

An SSB domain is found at 4 to 103 (VNRLVLSGTV…LHAEQIELID (100 aa)).

The protein belongs to the PriB family. In terms of assembly, homodimer. Interacts with PriA and DnaT. Component of the replication restart primosome. Primosome assembly occurs via a 'hand-off' mechanism. PriA binds to replication forks, subsequently PriB then DnaT bind; DnaT then displaces ssDNA to generate the helicase loading substrate.

Its function is as follows. Involved in the restart of stalled replication forks, which reloads the replicative helicase on sites other than the origin of replication; the PriA-PriB pathway is the major replication restart pathway. During primosome assembly it facilitates complex formation between PriA and DnaT on DNA; stabilizes PriA on DNA. Stimulates the DNA unwinding activity of PriA helicase. The sequence is that of Replication restart protein PriB from Pectobacterium carotovorum subsp. carotovorum (strain PC1).